A 69-amino-acid polypeptide reads, in one-letter code: U2-agatoxin-Ao1i (69 aa).

The first 20 residues, 1–20 (MKAIISLLLISAMVFSMIEA), serve as a signal peptide directing secretion. The propeptide occupies 21-34 (VPVXXGLQLFESER). Disulfide bonds link Cys36-Cys52, Cys43-Cys57, and Cys51-Cys67. Leu68 is subject to Leucine amide.

Belongs to the neurotoxin 01 (U2-agtx) family. Expressed by the venom gland.

Its subcellular location is the secreted. Functionally, insect active toxin causing rapid but reversible paralysis in crickets. No activity shown in mammals. Does not show effect on mammalian voltage-gated calcium channels. This is U2-agatoxin-Ao1i from Agelena orientalis (Funnel-web spider).